The primary structure comprises 147 residues: Hemoglobin subunit epsilon (147 aa).

The region spanning 3 to 147 (HFTAEEKATV…VANALAHKYH (145 aa)) is the Globin domain. Ser14 and Ser51 each carry phosphoserine. Heme b is bound by residues His64 and His93.

Belongs to the globin family. In terms of assembly, heterotetramer of two alpha chains and two epsilon chains in early embryonic hemoglobin Gower-2; two zeta chains and two epsilon chains in early embryonic hemoglobin Gower-1. As to expression, red blood cells.

Functionally, the epsilon chain is a beta-type chain of early mammalian embryonic hemoglobin. This Bradypus tridactylus (Pale-throated three-toed sloth) protein is Hemoglobin subunit epsilon (HBE1).